Consider the following 434-residue polypeptide: Probable zinc metalloprotease PTRG_04772 (434 aa).

A glycan (N-linked (GlcNAc...) asparagine) is linked at Asn-88. His-111, Asp-131, and Glu-164 together coordinate Zn(2+). A glycan (N-linked (GlcNAc...) asparagine) is linked at Asn-179. Asp-191 contributes to the Zn(2+) binding site. N-linked (GlcNAc...) asparagine glycosylation is found at Asn-220, Asn-299, Asn-347, Asn-353, Asn-390, and Asn-395. The Fibronectin type-III domain maps to 340–433 (SPTNVGINTT…LPFPFGCARN (94 aa)).

Belongs to the peptidase M28 family. M28B subfamily. Zn(2+) is required as a cofactor.

The protein localises to the secreted. In Pyrenophora tritici-repentis (strain Pt-1C-BFP) (Wheat tan spot fungus), this protein is Probable zinc metalloprotease PTRG_04772.